A 96-amino-acid polypeptide reads, in one-letter code: Transcription and mRNA export factor SUS1 (96 aa).

A Glycyl lysine isopeptide (Lys-Gly) (interchain with G-Cter in ubiquitin) cross-link involves residue lysine 68.

The protein belongs to the ENY2 family. In terms of assembly, component of the nuclear pore complex (NPC)-associated TREX-2 complex (transcription and export complex 2), composed of at least SUS1, SAC3, THP1, SEM1, and CDC31. TREX-2 contains 2 SUS1 chains. The TREX-2 complex interacts with the nucleoporin NUP1. Component of the 1.8 MDa SAGA transcription coactivator-HAT complex. SAGA is built of 5 distinct domains with specialized functions. Within the SAGA complex, SUS1, SGF11, SGF73 and UBP8 form an additional subcomplex of SAGA called the DUB module (deubiquitination module). Interacts directly with THP1, SAC3, SGF11, and with the RNA polymerase II.

The protein localises to the nucleus. The protein resides in the nucleoplasm. It is found in the cytoplasm. Its subcellular location is the P-body. Involved in mRNA export coupled transcription activation by association with both the TREX-2 and the SAGA complexes. At the promoters, SAGA is required for recruitment of the basal transcription machinery. It influences RNA polymerase II transcriptional activity through different activities such as TBP interaction and promoter selectivity, interaction with transcription activators, and chromatin modification through histone acetylation and deubiquitination. Within the SAGA complex, participates in a subcomplex required for deubiquitination of H2B and for the maintenance of steady-state H3 methylation levels. The TREX-2 complex functions in docking export-competent ribonucleoprotein particles (mRNPs) to the nuclear entrance of the nuclear pore complex (nuclear basket). TREX-2 participates in mRNA export and accurate chromatin positioning in the nucleus by tethering genes to the nuclear periphery. May also be involved in cytoplasmic mRNA decay by interaction with components of P-bodies. The polypeptide is Transcription and mRNA export factor SUS1 (Saccharomyces cerevisiae (strain RM11-1a) (Baker's yeast)).